A 96-amino-acid chain; its full sequence is uncharacterized protein (96 aa).

Basic and acidic residues predominate over residues 1-18; the sequence is MSNVDRYDVHRDGIEKDR. Positions 1-96 are disordered; sequence MSNVDRYDVH…REQHHQPQKQ (96 aa). Positions 28–46 are enriched in polar residues; sequence QNGQSQSTMDNRPPWNNDT. Residues 70-96 are compositionally biased toward basic and acidic residues; sequence TIDRQQEELTKNWTESLREQHHQPQKQ.

This is an uncharacterized protein from Caenorhabditis elegans.